A 352-amino-acid polypeptide reads, in one-letter code: Histidine biosynthesis bifunctional protein HisB (352 aa).

The interval 1-164 is histidinol-phosphatase; that stretch reads MSQKILFIDR…EIENEILSSF (164 aa). Catalysis depends on Asp-9, which acts as the Nucleophile. Residues Asp-9 and Asp-11 each contribute to the Mg(2+) site. Catalysis depends on Asp-11, which acts as the Proton donor. Zn(2+)-binding residues include Cys-93, His-95, Cys-101, and Cys-103. Position 130 (Asp-130) interacts with Mg(2+). Positions 165 to 352 are imidazoleglycerol-phosphate dehydratase; the sequence is RSASYQRTTK…ENLASSKGVI (188 aa).

The protein in the N-terminal section; belongs to the histidinol-phosphatase family. In the C-terminal section; belongs to the imidazoleglycerol-phosphate dehydratase family. It depends on Mg(2+) as a cofactor. Requires Zn(2+) as cofactor.

Its subcellular location is the cytoplasm. It carries out the reaction D-erythro-1-(imidazol-4-yl)glycerol 3-phosphate = 3-(imidazol-4-yl)-2-oxopropyl phosphate + H2O. It catalyses the reaction L-histidinol phosphate + H2O = L-histidinol + phosphate. The protein operates within amino-acid biosynthesis; L-histidine biosynthesis; L-histidine from 5-phospho-alpha-D-ribose 1-diphosphate: step 6/9. Its pathway is amino-acid biosynthesis; L-histidine biosynthesis; L-histidine from 5-phospho-alpha-D-ribose 1-diphosphate: step 8/9. The polypeptide is Histidine biosynthesis bifunctional protein HisB (Campylobacter jejuni subsp. jejuni serotype O:2 (strain ATCC 700819 / NCTC 11168)).